A 375-amino-acid polypeptide reads, in one-letter code: Actin-related protein T1 (375 aa).

The protein belongs to the actin family.

It is found in the cytoplasm. The protein localises to the cytoskeleton. It localises to the nucleus. The protein resides in the cytoplasmic vesicle. Its subcellular location is the secretory vesicle. It is found in the acrosome. Functionally, negatively regulates the Hedgehog (SHH) signaling. Binds to the promoter of the SHH signaling mediator, GLI1, and inhibits its expression. The chain is Actin-related protein T1 (ACTRT1) from Macaca fascicularis (Crab-eating macaque).